Consider the following 712-residue polypeptide: MATSSVSKGCFVFKPNFKKRKISVPIEDYFNKGKNASEDSKLRFETYQLIWQQMKSETERLQEELNKNLFDSLVEFLQTSHSGLWKNSKDWSCEIKLREIPTAALVLGVNVTDHDLTLRSLTEVLQNNVTPYVVSLQAKDCPDMKHFLQKLVSQLMDCKVDVQSKEKESVQVIQKNVHYSMDSLSAWYMSVTQKTDPKMPRKKRTSSSQWQSPPVVLILKDMESFTTKVLQDFIIISSQHLHEFPLILIFGIATSPVVIHRLLPHAVSSLLCIELFQSLSCKEHLTTVLDKLLLTTQFPFKLSEKVLQILTNIFLYHDFSIQNFIKGLQLSLLEHFYSQPLSVLCCNLPEAKRRIRFLSANQCENIRRLPSFRRYVEKQSSEKQVALLTSDKFLKEETQSLLENLHVYHKNYFLVLRCLHQFTSSLPKYPLGRQIRELYCMCLEKSIWDSEEYASVLQLLRLLAKDELMAMLQNCFKLFQSSSGKELGNTAKRIEEFLAQFQSLDETKEEEDTSQSQSKGLQKTDLYHLQKSLLEMKELRSTSKRQTKFEVLREQVVSFVDSLVREYLLPPDTQPLHETLYFSSAHTLRQHLNAAPRIALHTALNNPYYYLKNEALRSEEGCIPNVAPDICIAYKLHLECSRLINLVDWSEAFATVVTAAEKMDANSVTSGERNEIIHARFIRAVSELELLGFIKPTKQKTDHVARLTWGGC.

2 positions are modified to phosphoserine: S23 and S516.

The protein belongs to the ORC3 family. As to quaternary structure, component of ORC, a complex composed of at least 6 subunits: ORC1, ORC2, ORC3, ORC4, ORC5 and ORC6. ORC is regulated in a cell-cycle dependent manner. It is sequentially assembled at the exit from anaphase of mitosis and disassembled as cells enter S phase. In terms of processing, multi-mono-ubiquitinated by OBI1; ubiquitination is important for efficient DNA replication origin site activation. Ubiquitination levels are low in mitotic and early G1-phAse cells and are induced in late G1-/early S-phase, peaking in S-phase and decrease toward the end of the cell cycle.

Its subcellular location is the nucleus. The protein resides in the chromosome. Functionally, component of the origin recognition complex (ORC) that binds origins of replication. DNA-binding is ATP-dependent. The specific DNA sequences that define origins of replication have not been identified yet. ORC is required to assemble the pre-replication complex necessary to initiate DNA replication. Binds histone H3 and H4 trimethylation marks H3K9me3, H3K27me3 and H4K20me3. This chain is Origin recognition complex subunit 3 (ORC3), found in Bos taurus (Bovine).